We begin with the raw amino-acid sequence, 467 residues long: Putative laccase-16 (467 aa).

Plastocyanin-like domains are found at residues 7-88 (VLGS…PKHG), 98-225 (KEIP…YTDS), and 318-451 (DFPN…KDGK). Residues His-22, His-24, His-67, and His-69 each contribute to the Cu cation site. Cu cation contacts are provided by His-368, His-371, His-373, His-430, Cys-431, His-432, His-436, and Met-441.

Belongs to the multicopper oxidase family. Cu cation is required as a cofactor.

The protein localises to the secreted. It is found in the extracellular space. The protein resides in the apoplast. The catalysed reaction is 4 hydroquinone + O2 = 4 benzosemiquinone + 2 H2O. Lignin degradation and detoxification of lignin-derived products. In Oryza sativa subsp. japonica (Rice), this protein is Putative laccase-16 (LAC16).